Here is a 244-residue protein sequence, read N- to C-terminus: MALLPVVVFLITMLLPCVLTNGKDPAFTALITTQSQVQNEIINKHNQLRKSVTPPASNMLKMEWSREAAVNAQKWANRCTLVHSNPDDRKTSTKCGENLYMSSDPSSWSDAIQSWFDESQDFTFGVGPKSHNAVVGHYTQLVWYSSYLVGCGIAYCPNQDSLKYYYVCQYCPAGNNVYTKNTPYKQGIPCASCPGHCENGLCTNSCEYEDLLSNCESLKNTAGCEHQLLVEKCKATCRCEDKIY.

Residues 1-21 form the signal peptide; the sequence is MALLPVVVFLITMLLPCVLTN. Residues 43–170 enclose the SCP domain; sequence NKHNQLRKSV…SLKYYYVCQY (128 aa). 5 disulfides stabilise this stretch: C190/C197, C193/C202, C206/C239, C215/C233, and C224/C237. Residues 206–239 form the ShKT domain; that stretch reads CEYEDLLSNCESLKNTAGCEHQLLVEKCKATCRC.

Belongs to the CRISP family. In terms of assembly, interacts with NSUN4 isoform 3. As to expression, testis.

Its subcellular location is the secreted. In terms of biological role, may regulate some ion channels' activity and thereby regulate calcium fluxes during sperm capacitation. The sequence is that of Cysteine-rich secretory protein 2 (CRISP2) from Cavia porcellus (Guinea pig).